The following is a 383-amino-acid chain: Chaperone protein DnaJ (383 aa).

In terms of domain architecture, J spans 6–71 (DYYEVLGVSK…QKRSQYDQFG (66 aa)). A CR-type zinc finger spans residues 141–223 (GVEKKVKVKK…CKGEGVEIGE (83 aa)). 8 residues coordinate Zn(2+): Cys154, Cys157, Cys171, Cys174, Cys197, Cys200, Cys211, and Cys214. CXXCXGXG motif repeat units follow at residues 154–161 (CSKCRGDG), 171–178 (CQTCHGTG), 197–204 (CPTCHGEG), and 211–218 (CSKCKGEG).

It belongs to the DnaJ family. Homodimer. Zn(2+) serves as cofactor.

The protein resides in the cytoplasm. In terms of biological role, participates actively in the response to hyperosmotic and heat shock by preventing the aggregation of stress-denatured proteins and by disaggregating proteins, also in an autonomous, DnaK-independent fashion. Unfolded proteins bind initially to DnaJ; upon interaction with the DnaJ-bound protein, DnaK hydrolyzes its bound ATP, resulting in the formation of a stable complex. GrpE releases ADP from DnaK; ATP binding to DnaK triggers the release of the substrate protein, thus completing the reaction cycle. Several rounds of ATP-dependent interactions between DnaJ, DnaK and GrpE are required for fully efficient folding. Also involved, together with DnaK and GrpE, in the DNA replication of plasmids through activation of initiation proteins. The protein is Chaperone protein DnaJ of Porphyromonas gingivalis (strain ATCC BAA-308 / W83).